The sequence spans 747 residues: MDDDGLLLNFAAPDSNASSKSSAQKPVKVSGGRWKDRRKLQLSLSGRGRNKRAETGVNKESIAQPRDFSSSKPQSFREEQLAKRPKYFESRGEGGKNETYVSSLFTSNTKSKLENEKVEEEKTYLPSNAPMKGADDFNGLGLNDNLVHHLTESLRFKNPTQIQKSVIPSLLSTSRDLFVKAQTGSGKTLSFLLPILHKLMQEKKNPITRESGVFAIVLVPTRELANQIYGVLETLTRCHHQIVPGIVIGGEKKKSEKARIRKGVNILVATPGRLADHIENTTSLDLSQLRYLILDEGDRLIDLGFEETITKITDTITRCSRISESTQKWQGLPTKRVNVLCSATMENNVEKLGSIILNNPEQISIDTSKSREGDEIDSKSMAPAQLTQRVVVVPAKLRLVTLSAVLKEVAKTAPTSSTEIVRTIVFFSCSDSVNFHYEAFKRNGSEFRKARNAETNRFEMVTVGEDEANAEGSDTEIPKISSAPTISANSVVYKLHGSLTQQVRTSTLQSFVQAVPFDNSENNYNHLILLCTDVASRGLDLPNISSVVEYDPPFSVQDHLHRIGRTARLGNKGSSYLFLLPGIEEGYVDGKIRVVHPEGSIRITNYETILQNAFGDSSEIKKSDPKSKQGKWDMHATTWHLDIERWLLEDAASHESAKQAFTSHIRAYATHLSSEKTFFNVKTLHLGHLAKSFGLREPPKKLGSLATKSSSTRKEYGEKSRKLEDPRKKMLRMAKLAASSASSEFNY.

Disordered regions lie at residues 1–102 (MDDD…TYVS) and 111–130 (SKLE…SNAP). Positions 15–24 (SNASSKSSAQ) are enriched in polar residues. Composition is skewed to basic and acidic residues over residues 75–96 (SFRE…EGGK) and 111–123 (SKLE…EEKT). The short motif at 135–164 (DDFNGLGLNDNLVHHLTESLRFKNPTQIQK) is the Q motif element. The Helicase ATP-binding domain occupies 168–363 (PSLLSTSRDL…SIILNNPEQI (196 aa)). ATP is bound at residue 181–188 (AQTGSGKT). Residues 295-298 (DEGD) carry the DEAD box motif. The 226-residue stretch at 401 to 626 (TLSAVLKEVA…SSEIKKSDPK (226 aa)) folds into the Helicase C-terminal domain. The tract at residues 700–729 (KKLGSLATKSSSTRKEYGEKSRKLEDPRKK) is disordered. Over residues 712–728 (TRKEYGEKSRKLEDPRK) the composition is skewed to basic and acidic residues.

This sequence belongs to the DEAD box helicase family. DDX31/DBP7 subfamily.

It is found in the nucleus. The protein resides in the nucleolus. It carries out the reaction ATP + H2O = ADP + phosphate + H(+). ATP-binding RNA helicase involved in the biogenesis of 60S ribosomal subunits and is required for the normal formation of 25S and 5.8S rRNAs. This is ATP-dependent RNA helicase DBP7 (DBP7) from Meyerozyma guilliermondii (strain ATCC 6260 / CBS 566 / DSM 6381 / JCM 1539 / NBRC 10279 / NRRL Y-324) (Yeast).